Reading from the N-terminus, the 420-residue chain is Dachshund homolog dac-1 (420 aa).

The segment at 23-77 (PSSSSSSSNNSSSNTSSSNFLSPYEYQESSTSPRDTTDSSGESSLSSSGSSSSLN) is disordered. Composition is skewed to low complexity over residues 24 to 41 (SSSS…SSSN) and 51 to 77 (SSTS…SSLN). The segment at 85–171 (KLIKFRGHNV…LLKTSDFEKL (87 aa)) is DACHbox-N. The span at 242 to 258 (NSFERADDDDQNQRDAD) shows a compositional bias: basic and acidic residues. Positions 242–321 (NSFERADDDD…SSSSSGKNDE (80 aa)) are disordered. Over residues 263-273 (LNLSKSGGNSE) the composition is skewed to polar residues. Positions 297–317 (GGSNSNSLSMSMEAGSSSSSG) are enriched in low complexity.

It belongs to the DACH/dachshund family. In terms of tissue distribution, expressed in AFD, AWC, ASE and ASK neurons. Expressed in the alae.

It is found in the nucleus. Functionally, transcription factor. Plays a role in the thermotactic response. This Caenorhabditis elegans protein is Dachshund homolog dac-1.